Reading from the N-terminus, the 2333-residue chain is Genome polyprotein (2333 aa).

Residues M1–K201 form the Peptidase C28 domain. Over M1–L1481 the chain is Cytoplasmic. Catalysis depends on for leader protease activity residues C51, H148, and D163. Disordered regions lie at residues Q197–N218 and Q238–N265. The N-myristoyl glycine; by host moiety is linked to residue G202. Polar residues-rich tracts occupy residues G204–N218 and Q238–G251. The span at S252–N265 shows a compositional bias: low complexity. Residues A789–Y797 form an antigenic epitope region. The short motif at R869–D871 is the Cell attachment site element. In terms of domain architecture, SF3 helicase spans N1190–D1354. An ATP-binding site is contributed by G1218 to S1225. An intramembrane segment occupies K1482–I1502. Residues R1503–A2333 lie on the Cytoplasmic side of the membrane. 2 stretches are compositionally biased toward basic and acidic residues: residues K1530–P1539 and F1550–E1564. The interval K1530–P1585 is disordered. Over residues E1567–E1579 the composition is skewed to low complexity. Residues Y1582, Y1605, and Y1629 each carry the O-(5'-phospho-RNA)-tyrosine modification. The 197-residue stretch at A1653–L1849 folds into the Peptidase C3 domain. The active-site For protease 3C activity; Proton donor/acceptor is H1696. Catalysis depends on for protease 3C activity residues D1734 and C1813. Positions M1879 to T1887 match the Nuclear localization signal motif. A RdRp catalytic domain is found at R2097–A2215. The For RdRp activity role is filled by D2201.

Belongs to the picornaviruses polyprotein family. In terms of assembly, interacts with host ISG15. Interacts (via R-G-D motif) with host ITGAV/ITGB6. Interacts with host MAVS; this interaction inhibits binding of host TRAF3 to MAVS, thereby suppressing interferon-mediated responses. As to quaternary structure, forms homooligomers. In terms of assembly, homohexamer. Interacts with host VIM. Interacts with host BECN1. Interacts with host DCTN3. As to quaternary structure, interacts with RNA-dependent RNA polymerase; this interaction allows 3B-1 to binds 2 polymerases and act as a primer. It also allows the recruitment of the RNA-dependent RNA polymerase to host membranes. In terms of assembly, interacts with RNA-dependent RNA polymerase; this interaction allows 3B-2 to act as a primer. Interacts with RNA-dependent RNA polymerase; this interaction allows 3B-3 to act as a primer. As to quaternary structure, interacts with 3B-1; this interaction allows 3B-1 to binds 2 polymerases and act as a primer. It also allows the recruitment of the RNA-dependent RNA polymerase to host membranes. Interacts with 3B-2; this interaction allows 3B-2 to act as a primer. Interacts with 3B-3; this interaction allows 3B-3 to act as a primer. Post-translationally, removes six residues from its own C-terminus, generating sLb(pro). Specific enzymatic cleavages in vivo by the viral proteases yield a variety of precursors and mature proteins. The polyprotein seems to be cotranslationally cleaved at the 2A/2B junction by a ribosomal skip from one codon to the next without formation of a peptide bond. This process would release the L-P1-2A peptide from the translational complex. In terms of processing, during virion maturation, immature virions are rendered infectious following cleavage of VP0 into VP4 and VP2. This maturation seems to be an autocatalytic event triggered by the presence of RNA in the capsid and is followed by a conformational change of the particle. Post-translationally, myristoylation is required during RNA encapsidation and formation of the mature virus particle. Uridylylated by the polymerase and covalently linked to the 5'-end of genomic RNA. These uridylylated forms act as a nucleotide-peptide primer for the polymerase.

The protein resides in the host nucleus. The protein localises to the host cytoplasm. It is found in the virion. Its subcellular location is the host endoplasmic reticulum membrane. It localises to the host cytoplasmic vesicle membrane. The catalysed reaction is Autocatalytically cleaves itself from the polyprotein of the foot-and-mouth disease virus by hydrolysis of a Lys-|-Gly bond, but then cleaves host cell initiation factor eIF-4G at bonds -Gly-|-Arg- and -Lys-|-Arg-.. The enzyme catalyses a ribonucleoside 5'-triphosphate + H2O = a ribonucleoside 5'-diphosphate + phosphate + H(+). It carries out the reaction RNA(n) + a ribonucleoside 5'-triphosphate = RNA(n+1) + diphosphate. It catalyses the reaction Selective cleavage of Gln-|-Gly bond in the poliovirus polyprotein. In other picornavirus reactions Glu may be substituted for Gln, and Ser or Thr for Gly.. In terms of biological role, autocatalytically cleaves itself from the polyprotein at the L/VP0 junction. Also cleaves the host translation initiation factors EIF4G1 and EIF4G3, in order to shut off the capped cellular mRNA transcription. Plays a role in counteracting host innate antiviral response using diverse mechanisms. Possesses a deubiquitinase activity acting on both 'Lys-48' and 'Lys-63'-linked polyubiquitin chains. In turn, inhibits the ubiquitination and subsequent activation of key signaling molecules of type I IFN response such as host RIGI, TBK1, TRAF3 and TRAF6. Inhibits host NF-kappa-B activity by inducing a decrease in RELA mRNA levels. Cleaves a peptide bond in the C-terminus of host ISG15, resulting in the damaging of this modifier that can no longer be attached to target proteins. Also cleaves host G3BP1 and G3BP2 in order to inhibit cytoplasmic stress granules assembly. Its function is as follows. Lies on the inner surface of the capsid shell. After binding to the host receptor, the capsid undergoes conformational changes. Capsid protein VP4 is released, capsid protein VP1 N-terminus is externalized, and together, they shape a pore in the host membrane through which the viral genome is translocated into the host cell cytoplasm. After genome has been released, the channel shrinks. Forms an icosahedral capsid of pseudo T=3 symmetry with capsid proteins VP1 and VP3. The capsid is composed of 60 copies of each capsid protein organized in the form of twelve pentamers and encloses the viral positive strand RNA genome. Upon acidifcation in the endosome, dissociates into pentamers. Functionally, forms an icosahedral capsid of pseudo T=3 symmetry with capsid proteins VP0 and VP3. The capsid is composed of 60 copies of each capsid protein organized in the form of twelve pentamers and encloses the viral positive strand RNA genome. Upon acidifcation in the endosome, dissociates into pentamers. In terms of biological role, forms an icosahedral capsid of pseudo T=3 symmetry with capsid proteins VP2 and VP3. The capsid is composed of 60 copies of each capsid protein organized in the form of twelve pentamers and encloses the viral positive strand RNA genome. Mediates cell entry by attachment to an integrin receptor, usually host ITGAV/ITGB6. In addition, targets host MAVS to suppress type I IFN pathway. Upon acidifcation in the endosome, dissociates into pentamers. Its function is as follows. Mediates self-processing of the polyprotein by a translational effect termed 'ribosome skipping'. Mechanistically, 2A-mediated cleavage occurs between the C-terminal glycine and the proline of the downstream protein 2B. In the case of foot-and-mouth disease virus, the 2A oligopeptide is post-translationally 'trimmed' from the C-terminus of the upstream protein 1D by 3C proteinase. Plays an essential role in the virus replication cycle by acting as a viroporin. Creates a pore in the host endoplasmic reticulum and as a consequence releases Ca2+ in the cytoplasm of infected cell. In turn, high levels of cytoplasmic calcium may trigger membrane trafficking and transport of viral ER-associated proteins to viroplasms, sites of viral genome replication. Functionally, associates with and induces structural rearrangements of intracellular membranes. Triggers host autophagy by interacting with host BECN1 and thereby promotes viral replication. Participates in viral replication and interacts with host DHX9. Displays RNA-binding, nucleotide binding and NTPase activities. May play a role in virion morphogenesis and viral RNA encapsidation by interacting with the capsid protein VP3. In terms of biological role, plays important roles in virus replication, virulence and host range. Cooperates with host DDX56 to inhibit IRF3 nuclear translocation and subsequent type I interferon production. Its function is as follows. Covalently linked to the 5'-end of both the positive-strand and negative-strand genomic RNAs. Acts as a genome-linked replication primer. Cysteine protease that generates mature viral proteins from the precursor polyprotein. In addition to its proteolytic activity, binds to viral RNA and thus influences viral genome replication. RNA and substrate bind cooperatively to the protease. Functionally, RNA-directed RNA polymerase 3D-POL replicates genomic and antigenomic RNA by recognizing replications specific signals. Covalently attaches UMP to a tyrosine of VPg, which is used to prime RNA synthesis. The positive stranded RNA genome is first replicated at virus induced membranous vesicles, creating a dsRNA genomic replication form. This dsRNA is then used as template to synthesize positive stranded RNA genomes. ss(+)RNA genomes are either translated, replicated or encapsidated. This chain is Genome polyprotein, found in Bos taurus (Bovine).